We begin with the raw amino-acid sequence, 405 residues long: Putative polysaccharide ligase RP358 (405 aa).

Transmembrane regions (helical) follow at residues 23–43 (IAATVAFFLLSIIITGFISFI), 77–97 (LFTAWCFISCLFAVHPINSLV), 120–140 (VLYIKNSLILGIITAILLFFI), 156–178 (FGLYMLDRGCALLSITTWVAIII), 201–221 (ISDSLASFLGFSIGGIIFILA), 227–247 (IFFKLITISLITGSLLFPVIA), 270–290 (LFIWHFVANKIIIRPILGYGF), 322–342 (ILQITLELGILGLALFLCLVY), 353–375 (VSNFRAASYSCFINYYIIGMISY), and 377–397 (IWQTWWILSGIWILVLMKLLV).

It belongs to the O-antigen ligase family.

The protein resides in the membrane. In Rickettsia prowazekii (strain Madrid E), this protein is Putative polysaccharide ligase RP358.